The following is a 1977-amino-acid chain: Protein rotatin homolog (1977 aa).

Residues 141-166 (SVSSLSSNDIPSQATESADSSSNQIY) are disordered.

The protein belongs to the rotatin family. Interacts with Rcd4;this complex is recruited to daughter centrioles before their conversion to centrosomes.

It localises to the cytoplasm. Its subcellular location is the cytoskeleton. The protein resides in the microtubule organizing center. It is found in the centrosome. The protein localises to the centriole. Functionally, participes in the structural integrity of both centrioles and basal bodies and in centriole cohesion. Participates in the later stages of centriole assembly through the interaction with Rcd4 leading to the centriole to centrosome conversion. This chain is Protein rotatin homolog, found in Drosophila melanogaster (Fruit fly).